Here is a 240-residue protein sequence, read N- to C-terminus: Ribosome maturation protein SDO1 homolog (240 aa).

It belongs to the SDO1/SBDS family.

This chain is Ribosome maturation protein SDO1 homolog, found in Methanocaldococcus jannaschii (strain ATCC 43067 / DSM 2661 / JAL-1 / JCM 10045 / NBRC 100440) (Methanococcus jannaschii).